A 753-amino-acid polypeptide reads, in one-letter code: Rsm22-cox11 tandem protein 1, mitochondrial (753 aa).

The transit peptide at Met-1–Trp-39 directs the protein to the mitochondrion. Residues Cys-323, Cys-329, Cys-342, and Cys-430 each coordinate [4Fe-4S] cluster. Residues Ile-571 to Leu-591 form a helical membrane-spanning segment. Topologically, residues Tyr-592 to Asn-753 are mitochondrial intermembrane.

In the N-terminal section; belongs to the methyltransferase superfamily. Rsm22 family. It in the C-terminal section; belongs to the COX11/CtaG family. As to quaternary structure, associates with the mitochondrial ribosome (mitoribosome). Only transiently interacts with the mitoribosome. Specific enzymatic cleavages in vivo by mitochondrial processing peptidase (MPP) yield mature proteins including rsm22-1 and cox11-1.

It localises to the mitochondrion. Its subcellular location is the mitochondrion inner membrane. In terms of biological role, mitochondrial ribosome (mitoribosome) assembly factor. Binds at the interface of the head and body domains of the mitochondrial small ribosomal subunit (mt-SSU), occluding the mRNA channel and preventing compaction of the head domain towards the body. Probable inactive methyltransferase: retains the characteristic folding and ability to bind S-adenosyl-L-methionine, but it probably lost its methyltransferase activity. Functionally, exerts its effect at some terminal stage of cytochrome c oxidase synthesis, probably by being involved in the insertion of the copper B into subunit I. In Schizosaccharomyces pombe (strain 972 / ATCC 24843) (Fission yeast), this protein is Rsm22-cox11 tandem protein 1, mitochondrial (cox1101).